We begin with the raw amino-acid sequence, 507 residues long: MTKYVAVIDQGTTSTRCMVFNKQGEIVAQHQLEHEQICPQAGWVEHDPLEIWERTKDVIHGSVAKAGLVAADIAAIGITNQRETTMIWNRKTGQPYGNAIVWQDTRTDIVCNQMSAEGGQNRFQAKTGLPLATYFSGPKIRWMLDHYPGLRQDAEKGEALFGNMDSWLIWKLTGGPGPAAVHVTDVTNASRTMLMNLKTLDWDEELLSAFAIPRAMLPSIRPSSDPEFYGFTRQDGPFGGEIPICGDLGDQQAATVGQVCFDAGEAKNTYGTGCFMLMNTGTEMVHSNHGLLTTVCYQFGHEKPHYALEGSVAIAGALVQWLRDRMRVINTAADIENLAKLVPDNGGMYFVPAFSGLFAPYWRSEARGLIIGMTRFINRGHFARASLEAAAYQTREVVDAMQADSNVSLKVLKVDGGMTANDLLMQIQADVLGVPVVRPKVAESTALGAAYAAGLAIGYWKNSDDLCQNWGVDKSWKPSGDDTLRTKNYAMWKKAVTRTFDWLDESA.

ADP is bound at residue T12. ATP contacts are provided by T12, T13, and S14. Residue T12 participates in sn-glycerol 3-phosphate binding. An ADP-binding site is contributed by R16. The sn-glycerol 3-phosphate site is built by R82, E83, Y134, and D250. 5 residues coordinate glycerol: R82, E83, Y134, D250, and Q251. ADP-binding residues include T272 and G316. The ATP site is built by T272, G316, Q320, and G417. The ADP site is built by G417 and N421.

Belongs to the FGGY kinase family.

The enzyme catalyses glycerol + ATP = sn-glycerol 3-phosphate + ADP + H(+). It functions in the pathway polyol metabolism; glycerol degradation via glycerol kinase pathway; sn-glycerol 3-phosphate from glycerol: step 1/1. Its activity is regulated as follows. Inhibited by fructose 1,6-bisphosphate (FBP). Key enzyme in the regulation of glycerol uptake and metabolism. Catalyzes the phosphorylation of glycerol to yield sn-glycerol 3-phosphate. This Beijerinckia indica subsp. indica (strain ATCC 9039 / DSM 1715 / NCIMB 8712) protein is Glycerol kinase.